The primary structure comprises 224 residues: Perchlorate reductase assembly chaperone protein (224 aa).

This sequence belongs to the type II DMSO reductase enzyme chaperone family.

It localises to the cytoplasm. May function as a system-specific molybdenum chaperone protein essential for the assembly of the perchlorate reductase PcrAB complex prior to its periplasmic translocation via the Tat pathway. This Dechloromonas aromatica (strain RCB) protein is Perchlorate reductase assembly chaperone protein (pcrD).